The chain runs to 586 residues: Axin-like protein pry-1 (586 aa).

The required for interaction with apr-1 stretch occupies residues 1–135; that stretch reads METHLGWARS…FIEAFNKMSS (135 aa). The RGS domain maps to 10–131; sequence SLEAVLSDRS…GSEEFIEAFN (122 aa). Disordered stretches follow at residues 137–168, 344–442, and 478–501; these read TADQ…KSAA, MTDD…DSFA, and TSSL…HSKI. 2 stretches are compositionally biased toward polar residues: residues 151–168 and 368–388; these read HQNT…KSAA and GEGS…QLHN. Residues 421-442 are compositionally biased toward low complexity; the sequence is SQSMCAPSYSSASSSYSRDSFA. Basic residues predominate over residues 486 to 501; sequence RRQHRKAPTPKKHSKI. Residues 505-586 form the DIX domain; it reads LSNLITISYL…FEGRIAAELR (82 aa).

In terms of assembly, interacts (via N-terminus) with apr-1 (via C-terminus). Interacts with bar-1 (via ARM repeats), gsk-3, and mig-5. As to expression, expressed in hypodermal cells (seam cells) V5 and V6, Q neuroblasts, ventral hypodermal cells P7/8 to P11/12, body wall muscle cells and neurons in the head, the tail and the ventral nerve cord.

The protein resides in the cell membrane. Its subcellular location is the nucleus. The protein localises to the cytoplasm. It localises to the cell cortex. Works in parallel with axl-1 in negatively regulating bar-1 signaling in vulval precursor cells and Q neuroblasts. Inhibits Wnt signaling, which affects tissue specific expression of Hox genes, egl-5, lin-39 and mab-5. This in turn affects QR (postembryonic neuroblast) cell migration, vulval cell fate specification, and the development of sensory structures by the seam cell lineage. Has a role in alae V cell patterning, ray formation in the male tail and axon guidance. Does not affect B cell polarity. This chain is Axin-like protein pry-1, found in Caenorhabditis elegans.